Here is a 295-residue protein sequence, read N- to C-terminus: Nucleotide-binding protein LACR_1047 (295 aa).

Residue 12-19 (GMSGAGKT) coordinates ATP. 63–66 (DMRS) serves as a coordination point for GTP.

It belongs to the RapZ-like family.

Its function is as follows. Displays ATPase and GTPase activities. This is Nucleotide-binding protein LACR_1047 from Lactococcus lactis subsp. cremoris (strain SK11).